Reading from the N-terminus, the 428-residue chain is C4-dicarboxylate transport protein (428 aa).

The next 8 helical transmembrane spans lie at 8 to 28 (VLYV…HYYP), 44 to 64 (LIKM…IAGM), 78 to 98 (LLYF…ATHI), 148 to 168 (GEIL…AHLG), 184 to 204 (VLFG…FGAM), 222 to 242 (LIGT…GAIA), 307 to 327 (IYMT…LTWM), and 355 to 375 (AATL…ILGI).

This sequence belongs to the dicarboxylate/amino acid:cation symporter (DAACS) (TC 2.A.23) family.

Its subcellular location is the cell inner membrane. In terms of biological role, responsible for the transport of dicarboxylates such as succinate, fumarate, and malate from the periplasm across the membrane. This chain is C4-dicarboxylate transport protein, found in Burkholderia mallei (strain ATCC 23344).